A 373-amino-acid chain; its full sequence is Alanine racemase (373 aa).

K40 serves as the catalytic Proton acceptor; specific for D-alanine. Residue K40 is modified to N6-(pyridoxal phosphate)lysine. R140 is a binding site for substrate. The active-site Proton acceptor; specific for L-alanine is Y268. M315 is a binding site for substrate.

Belongs to the alanine racemase family. Pyridoxal 5'-phosphate is required as a cofactor.

It catalyses the reaction L-alanine = D-alanine. It functions in the pathway amino-acid biosynthesis; D-alanine biosynthesis; D-alanine from L-alanine: step 1/1. Functionally, catalyzes the interconversion of L-alanine and D-alanine. May also act on other amino acids. In Levilactobacillus brevis (strain ATCC 367 / BCRC 12310 / CIP 105137 / JCM 1170 / LMG 11437 / NCIMB 947 / NCTC 947) (Lactobacillus brevis), this protein is Alanine racemase (alr).